The following is a 497-amino-acid chain: Cysteine--tRNA ligase (497 aa).

Cys-32 provides a ligand contact to Zn(2+). Positions 34-44 match the 'HIGH' region motif; the sequence is PTVYGEGHLGH. Zn(2+) is bound by residues Cys-228, His-253, and Glu-257. Residues 285–289 carry the 'KMSKS' region motif; that stretch reads KMGKS. Residue Lys-288 coordinates ATP.

This sequence belongs to the class-I aminoacyl-tRNA synthetase family. As to quaternary structure, monomer. Zn(2+) is required as a cofactor.

It is found in the cytoplasm. The enzyme catalyses tRNA(Cys) + L-cysteine + ATP = L-cysteinyl-tRNA(Cys) + AMP + diphosphate. The polypeptide is Cysteine--tRNA ligase (Cytophaga hutchinsonii (strain ATCC 33406 / DSM 1761 / CIP 103989 / NBRC 15051 / NCIMB 9469 / D465)).